A 280-amino-acid chain; its full sequence is MTQPSGLKNLLRAAAGALPVVPRTDQLPNRTVTVEELPIDPANVAAYAAVTGLRYGNQVPLTYPFALTFPSVMSLVTGFDFPFAAMGAIHTENHITQYRPIAVTDAVGVRVRAENLREHRRGLLVDLVTNVSVGNDVAWHQVTTFLHQQRTSLSGEPKPPPQKKPKLPPPAAVLRITPAKIRRYAAVGGDHNPIHTNPIAAKLFGFPTVIAHGMFTAAAVLANIEARFPDAVRYSVRFAKPVLLPATAGLYVAEGDGGWDLTLRNMAKGYPHLTATVRGL.

The interval 149–170 is disordered; the sequence is QRTSLSGEPKPPPQKKPKLPPP. Positions 162–256 constitute a MaoC-like domain; that stretch reads QKKPKLPPPA…TAGLYVAEGD (95 aa).

This sequence belongs to the enoyl-CoA hydratase/isomerase family.

The catalysed reaction is a (3R)-3-hydroxyacyl-CoA = a (2E)-enoyl-CoA + H2O. It carries out the reaction (2E)-octenoyl-CoA + H2O = (3R)-hydroxyoctanoyl-CoA. The enzyme catalyses (3R)-3-hydroxydodecanoyl-CoA = (2E)-dodecenoyl-CoA + H2O. It catalyses the reaction (3R)-hydroxyhexadecanoyl-CoA = (2E)-hexadecenoyl-CoA + H2O. The catalysed reaction is (3R)-hydroxyeicosanoyl-CoA = (2E)-eicosenoyl-CoA + H2O. It carries out the reaction (3R)-3-hydroxybutanoyl-CoA = (2E)-butenoyl-CoA + H2O. In terms of biological role, shows trans-enoyl-CoA hydratase/3-hydroxyacyl-CoA dehydratase activity. Displays a broad chain length specificity, with a predilection for the C8 to C12 substrates. This Mycobacterium tuberculosis (strain ATCC 25618 / H37Rv) protein is 3-hydroxyacyl-thioester dehydratase X.